The chain runs to 614 residues: DNA mismatch repair protein MutL (614 aa).

It belongs to the DNA mismatch repair MutL/HexB family.

In terms of biological role, this protein is involved in the repair of mismatches in DNA. It is required for dam-dependent methyl-directed DNA mismatch repair. May act as a 'molecular matchmaker', a protein that promotes the formation of a stable complex between two or more DNA-binding proteins in an ATP-dependent manner without itself being part of a final effector complex. This Thermoanaerobacter pseudethanolicus (strain ATCC 33223 / 39E) (Clostridium thermohydrosulfuricum) protein is DNA mismatch repair protein MutL.